Consider the following 492-residue polypeptide: Trehalose-phosphatase (492 aa).

The segment at 1 to 55 is disordered; the sequence is MTETVTDQGKQRSSKLQKNEAAKDEQVEGKGKETLESGTDKSAEQNSSLLVGQPD. Residues 17 to 43 show a composition bias toward basic and acidic residues; the sequence is QKNEAAKDEQVEGKGKETLESGTDKSA. 2 residues coordinate Mg(2+): Asp-213 and Asp-215. The active-site Proton donor/acceptor is the Asp-215. 332 to 334 is a binding site for substrate; sequence QRK. Asp-424 is a Mg(2+) binding site.

The protein belongs to the gob-1 trehalose phosphatase family. The cofactor is Mg(2+).

It carries out the reaction alpha,alpha-trehalose 6-phosphate + H2O = alpha,alpha-trehalose + phosphate. Inhibited by trehalose 6-sulfate. Functionally, catalyzes the hydrolysis of trehalose 6-phosphate to trehalose and phosphate; prevents the accumulation of toxic levels of trehalose 6-phosphate. The polypeptide is Trehalose-phosphatase (Brugia malayi (Filarial nematode worm)).